The primary structure comprises 435 residues: Histone acetyltransferase type B subunit 2 (435 aa).

5 WD repeats span residues asparagine 135 to proline 175, glycine 188 to proline 228, glycine 238 to alanine 278, glycine 284 to histidine 324, and alanine 328 to threonine 368. The interaction with the histone H4 N-terminus stretch occupies residues aspartate 370 to aspartate 374. The stretch at glycine 385–tyrosine 425 is one WD 6 repeat.

This sequence belongs to the WD repeat RBAP46/RBAP48/MSI1 family. Component of the HAT-B complex composed of at least HAT1 and HAT2. The HAT-B complex binds to histone H4 tail.

The protein localises to the cytoplasm. It localises to the nucleus. Functionally, regulatory subunit of the histone acetylase B (HAT-B) complex. The complex acetylates 'Lys-12' of histone H4 which is required for telomeric silencing. In Cryptococcus neoformans var. neoformans serotype D (strain B-3501A) (Filobasidiella neoformans), this protein is Histone acetyltransferase type B subunit 2 (HAT2).